Consider the following 399-residue polypeptide: Argininosuccinate synthase (399 aa).

8 to 16 contacts ATP; that stretch reads AYSGGLDTS. Tyrosine 87 serves as a coordination point for L-citrulline. Residue glycine 117 participates in ATP binding. Residues threonine 119, asparagine 123, and aspartate 124 each coordinate L-aspartate. Asparagine 123 is an L-citrulline binding site. 4 residues coordinate L-citrulline: arginine 127, serine 175, glutamate 260, and tyrosine 272.

This sequence belongs to the argininosuccinate synthase family. Type 1 subfamily. In terms of assembly, homotetramer.

It is found in the cytoplasm. The catalysed reaction is L-citrulline + L-aspartate + ATP = 2-(N(omega)-L-arginino)succinate + AMP + diphosphate + H(+). The protein operates within amino-acid biosynthesis; L-arginine biosynthesis; L-arginine from L-ornithine and carbamoyl phosphate: step 2/3. In Mycolicibacterium smegmatis (strain ATCC 700084 / mc(2)155) (Mycobacterium smegmatis), this protein is Argininosuccinate synthase.